The sequence spans 82 residues: MVTIRLARGGAKKRPFYQVVVTDSRNARDGRFIERVGFFNPIASGQAEALRLDLDRIEHWVGLGATVSDRVHALIKDAKKAA.

The protein belongs to the bacterial ribosomal protein bS16 family.

The protein is Small ribosomal subunit protein bS16 of Serratia proteamaculans (strain 568).